The primary structure comprises 321 residues: Nitrilase blr3397 (321 aa).

The CN hydrolase domain maps to 10–277; the sequence is YKAAVVQAAS…ETILYADIAL (268 aa). Glu-50 acts as the Proton acceptor in catalysis. The active-site Proton donor is Lys-137. The active-site Nucleophile is the Cys-171.

The protein belongs to the carbon-nitrogen hydrolase superfamily. Nitrilase family. As to quaternary structure, homodecamer.

It carries out the reaction an aliphatic nitrile + 2 H2O = a carboxylate + NH4(+). Its function is as follows. Nitrilase that acts on various kinds of nitrile compounds such as aliphatic and aromatic nitriles. Has higher activity toward aliphatic nitriles compared to aromatic nitriles. Among the different substrates tested, has the highest activity toward hydrocinnamonitrile. The protein is Nitrilase blr3397 of Bradyrhizobium diazoefficiens (strain JCM 10833 / BCRC 13528 / IAM 13628 / NBRC 14792 / USDA 110).